The following is a 92-amino-acid chain: Small ribosomal subunit protein uS19 (92 aa).

The protein belongs to the universal ribosomal protein uS19 family.

In terms of biological role, protein S19 forms a complex with S13 that binds strongly to the 16S ribosomal RNA. This is Small ribosomal subunit protein uS19 from Crocosphaera subtropica (strain ATCC 51142 / BH68) (Cyanothece sp. (strain ATCC 51142)).